Consider the following 323-residue polypeptide: Beta-ketoacyl-[acyl-carrier-protein] synthase III (323 aa).

Active-site residues include cysteine 114 and histidine 250. Positions 251–255 (QANIR) are ACP-binding. The active site involves asparagine 280.

It belongs to the thiolase-like superfamily. FabH family. As to quaternary structure, homodimer.

The protein resides in the cytoplasm. It carries out the reaction malonyl-[ACP] + acetyl-CoA + H(+) = 3-oxobutanoyl-[ACP] + CO2 + CoA. It participates in lipid metabolism; fatty acid biosynthesis. Its function is as follows. Catalyzes the condensation reaction of fatty acid synthesis by the addition to an acyl acceptor of two carbons from malonyl-ACP. Catalyzes the first condensation reaction which initiates fatty acid synthesis and may therefore play a role in governing the total rate of fatty acid production. Possesses both acetoacetyl-ACP synthase and acetyl transacylase activities. Its substrate specificity determines the biosynthesis of branched-chain and/or straight-chain of fatty acids. The polypeptide is Beta-ketoacyl-[acyl-carrier-protein] synthase III (Ruegeria pomeroyi (strain ATCC 700808 / DSM 15171 / DSS-3) (Silicibacter pomeroyi)).